A 229-amino-acid chain; its full sequence is Large ribosomal subunit protein uL1 (229 aa).

It belongs to the universal ribosomal protein uL1 family. As to quaternary structure, part of the 50S ribosomal subunit.

Its function is as follows. Binds directly to 23S rRNA. The L1 stalk is quite mobile in the ribosome, and is involved in E site tRNA release. Functionally, protein L1 is also a translational repressor protein, it controls the translation of the L11 operon by binding to its mRNA. This chain is Large ribosomal subunit protein uL1, found in Phytoplasma australiense.